The chain runs to 419 residues: MHLLGFFSVACSLLAAALLPGPREAPAAAAAFESGLDLSDAEPDAGEATAYASKDLEEQLRSVSSVDELMTVLYPEYWKMYKCQLRKGGWQHNREQANLNSRTEETIKFAAAHYNTEILKSIDNEWRKTQCMPREVCIDVGKEFGVATNTFFKPPCVSVYRCGGCCNSEGLQCMNTSTSYLSKTLFEITVPLSQGPKPVTISFANHTSCRCMSKLDVYRQVHSIIRRSLPATLPQCQAANKTCPTNYMWNNHICRCLAQEDFMFSSDAGDDSTDGFHDICGPNKELDEETCQCVCRAGLRPASCGPHKELDRNSCQCVCKNKLFPSQCGANREFDENTCQCVCKRTCPRNQPLNPGKCACECTESPQKCLLKGKKFHHQTCSCYRRPCTNRQKACEPGFSYSEEVCRCVPSYWKRPQMS.

Positions 1 to 31 (MHLLGFFSVACSLLAAALLPGPREAPAAAAA) are cleaved as a signal peptide. The propeptide at 32–111 (FESGLDLSDA…RTEETIKFAA (80 aa)) is or 102. 3 disulfide bridges follow: Cys131-Cys173, Cys162-Cys209, and Cys166-Cys211. Residues Asn175, Asn205, and Asn240 are each glycosylated (N-linked (GlcNAc...) asparagine). The propeptide occupies 228–419 (SLPATLPQCQ…PSYWKRPQMS (192 aa)). 4 tandem repeats follow at residues 280 to 295 (CGPNKELDEETCQCVC), 304 to 319 (CGPHKELDRNSCQCVC), 328 to 343 (CGANREFDENTCQCVC), and 347 to 362 (CPRNQPLNPGKCACEC). The tract at residues 280–362 (CGPNKELDEE…LNPGKCACEC (83 aa)) is 4 X 16 AA repeats of C-X(10)-C-X-C-X(1,3)-C.

Belongs to the PDGF/VEGF growth factor family. As to quaternary structure, homodimer; non-covalent and antiparallel. Interacts with FLT4/VEGFR3; the interaction is required for FLT4/VEGFR3 homodimarization and activation. Undergoes a complex proteolytic maturation which generates a variety of processed secreted forms with increased activity toward VEGFR-3, but only the fully processed form could activate VEGFR-2. VEGF-C first form an antiparallel homodimer linked by disulfide bonds. Before secretion, a cleavage occurs between Arg-227 and Ser-228 producing a heterotetramer. The next extracellular step of the processing removes the N-terminal propeptide. Finally the mature VEGF-C is composed mostly of two VEGF homology domains (VHDs) bound by non-covalent interactions. As to expression, expressed in the spleen. Expressed in the lymph node, thymus, appendix and bone marrow. Expressed in the heart, placenta, skeletal muscle, ovary and small intestine. Expressed in the prostate, testis and colon.

The protein resides in the secreted. Its function is as follows. Growth factor active in angiogenesis, and endothelial cell growth, stimulating their proliferation and migration and also has effects on the permeability of blood vessels. May function in angiogenesis of the venous and lymphatic vascular systems during embryogenesis, and also in the maintenance of differentiated lymphatic endothelium in adults. Binds and activates KDR/VEGFR2 and FLT4/VEGFR3 receptors. This chain is Vascular endothelial growth factor C (VEGFC), found in Homo sapiens (Human).